A 716-amino-acid chain; its full sequence is Polyribonucleotide nucleotidyltransferase (716 aa).

Mg(2+)-binding residues include Asp490 and Asp496. In terms of domain architecture, KH spans 556 to 615 (PKIETLTIPTDKIREVIGSGGKVIREIVETSGAKVDINDDGVIKIASNDQAAIKKAYDMI). In terms of domain architecture, S1 motif spans 625–693 (GQIYTGKVVK…ERGKVRLGMK (69 aa)). The tract at residues 695–716 (VDQETGQEIQPEKKEREEAGEA) is disordered. Residues 704-716 (QPEKKEREEAGEA) show a composition bias toward basic and acidic residues.

The protein belongs to the polyribonucleotide nucleotidyltransferase family. Requires Mg(2+) as cofactor.

It is found in the cytoplasm. It carries out the reaction RNA(n+1) + phosphate = RNA(n) + a ribonucleoside 5'-diphosphate. Involved in mRNA degradation. Catalyzes the phosphorolysis of single-stranded polyribonucleotides processively in the 3'- to 5'-direction. The polypeptide is Polyribonucleotide nucleotidyltransferase (Cereibacter sphaeroides (strain KD131 / KCTC 12085) (Rhodobacter sphaeroides)).